Consider the following 475-residue polypeptide: Adenosylhomocysteinase (475 aa).

Substrate-binding residues include T60, D133, and E198. NAD(+) is bound at residue 199 to 201; it reads TTT. Residues K228 and D232 each contribute to the substrate site. NAD(+)-binding positions include N233, 262–267, E285, N320, 341–343, and N389; these read GYGDVG and IGH.

It belongs to the adenosylhomocysteinase family. Requires NAD(+) as cofactor.

It is found in the cytoplasm. It catalyses the reaction S-adenosyl-L-homocysteine + H2O = L-homocysteine + adenosine. The protein operates within amino-acid biosynthesis; L-homocysteine biosynthesis; L-homocysteine from S-adenosyl-L-homocysteine: step 1/1. In terms of biological role, may play a key role in the regulation of the intracellular concentration of adenosylhomocysteine. The protein is Adenosylhomocysteinase of Syntrophotalea carbinolica (strain DSM 2380 / NBRC 103641 / GraBd1) (Pelobacter carbinolicus).